The sequence spans 208 residues: Protein-L-isoaspartate O-methyltransferase (208 aa).

Ser59 is a catalytic residue.

It belongs to the methyltransferase superfamily. L-isoaspartyl/D-aspartyl protein methyltransferase family.

It localises to the cytoplasm. The catalysed reaction is [protein]-L-isoaspartate + S-adenosyl-L-methionine = [protein]-L-isoaspartate alpha-methyl ester + S-adenosyl-L-homocysteine. Functionally, catalyzes the methyl esterification of L-isoaspartyl residues in peptides and proteins that result from spontaneous decomposition of normal L-aspartyl and L-asparaginyl residues. It plays a role in the repair and/or degradation of damaged proteins. The sequence is that of Protein-L-isoaspartate O-methyltransferase from Cronobacter sakazakii (strain ATCC BAA-894) (Enterobacter sakazakii).